The sequence spans 141 residues: Nucleoside diphosphate kinase (141 aa).

ATP is bound by residues lysine 11, phenylalanine 59, arginine 87, threonine 93, arginine 104, and asparagine 114. The active-site Pros-phosphohistidine intermediate is histidine 117.

Belongs to the NDK family. As to quaternary structure, homotetramer. Requires Mg(2+) as cofactor.

It localises to the cytoplasm. It catalyses the reaction a 2'-deoxyribonucleoside 5'-diphosphate + ATP = a 2'-deoxyribonucleoside 5'-triphosphate + ADP. It carries out the reaction a ribonucleoside 5'-diphosphate + ATP = a ribonucleoside 5'-triphosphate + ADP. Its function is as follows. Major role in the synthesis of nucleoside triphosphates other than ATP. The ATP gamma phosphate is transferred to the NDP beta phosphate via a ping-pong mechanism, using a phosphorylated active-site intermediate. The protein is Nucleoside diphosphate kinase of Legionella pneumophila (strain Lens).